The chain runs to 454 residues: tRNA modification GTPase MnmE (454 aa).

(6S)-5-formyl-5,6,7,8-tetrahydrofolate is bound by residues Arg-23, Glu-80, and Lys-120. Residues 216–377 (GMKVVIAGRP…LRNHLKQSMG (162 aa)) form the TrmE-type G domain. Asn-226 serves as a coordination point for K(+). GTP-binding positions include 226-231 (NAGKSS), 245-251 (TDIAGTT), 270-273 (DTAG), 335-338 (NKAD), and 358-360 (SAR). Mg(2+) is bound at residue Ser-230. Thr-245, Ile-247, and Thr-250 together coordinate K(+). A Mg(2+)-binding site is contributed by Thr-251. Lys-454 lines the (6S)-5-formyl-5,6,7,8-tetrahydrofolate pocket.

The protein belongs to the TRAFAC class TrmE-Era-EngA-EngB-Septin-like GTPase superfamily. TrmE GTPase family. In terms of assembly, homodimer. Heterotetramer of two MnmE and two MnmG subunits. It depends on K(+) as a cofactor.

It localises to the cytoplasm. Functionally, exhibits a very high intrinsic GTPase hydrolysis rate. Involved in the addition of a carboxymethylaminomethyl (cmnm) group at the wobble position (U34) of certain tRNAs, forming tRNA-cmnm(5)s(2)U34. In Shigella sonnei (strain Ss046), this protein is tRNA modification GTPase MnmE.